The chain runs to 251 residues: MNLNSIPAFDDNYIWVLNDEAGRCLIVDPGDAEPVLNAIAANNWQPEAIFLTHHHHDHVGGVKELVKKFPQIVVYGPQETQDKGTTRVVKDGEIAFVLGHEFSVIATPGHTLGHICYFSKPYLFCGDTLFSGGCGRLFEGTPSQMYQSLKKLSALPDDTLVCCAHEYTLSNMKFALSILPHDLSINDYYRKVKELRAKNQITLPVILKNERQINVFLRTEDIDLINVINEETLLQQPEERFAWLRSKKDRF.

Positions 53, 55, 57, 58, 110, 127, and 165 each coordinate Zn(2+).

This sequence belongs to the metallo-beta-lactamase superfamily. Glyoxalase II family. As to quaternary structure, monomer. Requires Zn(2+) as cofactor.

The enzyme catalyses an S-(2-hydroxyacyl)glutathione + H2O = a 2-hydroxy carboxylate + glutathione + H(+). Its pathway is secondary metabolite metabolism; methylglyoxal degradation; (R)-lactate from methylglyoxal: step 2/2. Functionally, thiolesterase that catalyzes the hydrolysis of S-D-lactoyl-glutathione to form glutathione and D-lactic acid. This is Hydroxyacylglutathione hydrolase from Escherichia coli O17:K52:H18 (strain UMN026 / ExPEC).